Reading from the N-terminus, the 209-residue chain is Ribonuclease HII (209 aa).

Positions 19–208 (GLVAGVDEAG…VARALQAPVA (190 aa)) constitute an RNase H type-2 domain. Residues aspartate 25, glutamate 26, and aspartate 117 each contribute to the a divalent metal cation site.

Belongs to the RNase HII family. The cofactor is Mn(2+). Mg(2+) is required as a cofactor.

Its subcellular location is the cytoplasm. The catalysed reaction is Endonucleolytic cleavage to 5'-phosphomonoester.. Endonuclease that specifically degrades the RNA of RNA-DNA hybrids. The chain is Ribonuclease HII from Acidovorax ebreus (strain TPSY) (Diaphorobacter sp. (strain TPSY)).